Consider the following 156-residue polypeptide: Small ribosomal subunit protein uS7 (156 aa).

It belongs to the universal ribosomal protein uS7 family. Part of the 30S ribosomal subunit. Contacts proteins S9 and S11.

One of the primary rRNA binding proteins, it binds directly to 16S rRNA where it nucleates assembly of the head domain of the 30S subunit. Is located at the subunit interface close to the decoding center, probably blocks exit of the E-site tRNA. This chain is Small ribosomal subunit protein uS7, found in Thermobifida fusca (strain YX).